The chain runs to 207 residues: Sodium/potassium-transporting ATPase subunit beta-1-interacting protein 1 (207 aa).

3 helical membrane passes run 2–22 (GRCDGRCTLVVICCLQLVAAL), 35–55 (APILANFLHIMAVILGVFGTV), and 62–82 (LILYAVWLVVWVGWNSFIICF). Residue Asn100 is glycosylated (N-linked (GlcNAc...) asparagine). Residues 147–167 (VVSSALQVFLALFGFVYACYV) traverse the membrane as a helical segment.

It belongs to the NKAIN family. Interacts with atp1b1 C-terminus.

The protein localises to the cell membrane. This Danio rerio (Zebrafish) protein is Sodium/potassium-transporting ATPase subunit beta-1-interacting protein 1 (nkain1).